Here is a 187-residue protein sequence, read N- to C-terminus: MICGTDEAGRGPIAGPVVAAAVILDPDNPIEGLNDSKKLSEKKREKLSLEIKEKALYWAIAQSDPDEIEAINILWASMKAMQRAVEALPVKPDMVLVDGNRVPELKVPAKAIVGGDASEQCIAAASILAKVERDRQMLKWHELYPQYEFDKHKAYGTPKHLELLEKHGPCPIHRKGFNPVKRLLANL.

The 187-residue stretch at 1–187 folds into the RNase H type-2 domain; sequence MICGTDEAGR…NPVKRLLANL (187 aa). The a divalent metal cation site is built by Asp6, Glu7, and Asp98.

It belongs to the RNase HII family. Requires Mn(2+) as cofactor. It depends on Mg(2+) as a cofactor.

The protein resides in the cytoplasm. The enzyme catalyses Endonucleolytic cleavage to 5'-phosphomonoester.. Endonuclease that specifically degrades the RNA of RNA-DNA hybrids. This Idiomarina loihiensis (strain ATCC BAA-735 / DSM 15497 / L2-TR) protein is Ribonuclease HII.